The sequence spans 712 residues: Ribosomal RNA large subunit methyltransferase K/L (712 aa).

The region spanning 46-157 (GAYQALLHSR…RENMVVSLDL (112 aa)) is the THUMP domain.

This sequence belongs to the methyltransferase superfamily. RlmKL family.

It is found in the cytoplasm. It carries out the reaction guanosine(2445) in 23S rRNA + S-adenosyl-L-methionine = N(2)-methylguanosine(2445) in 23S rRNA + S-adenosyl-L-homocysteine + H(+). The enzyme catalyses guanosine(2069) in 23S rRNA + S-adenosyl-L-methionine = N(2)-methylguanosine(2069) in 23S rRNA + S-adenosyl-L-homocysteine + H(+). Functionally, specifically methylates the guanine in position 2445 (m2G2445) and the guanine in position 2069 (m7G2069) of 23S rRNA. This chain is Ribosomal RNA large subunit methyltransferase K/L, found in Actinobacillus pleuropneumoniae serotype 7 (strain AP76).